Here is a 339-residue protein sequence, read N- to C-terminus: Probable scoulerine-9-O-methyltransferase OMT3B (339 aa).

M161 lines the S-adenosyl-L-methionine pocket. Residue D164 participates in substrate binding. Residues T165, G191, D214, 228–229 (DV), and K242 each bind S-adenosyl-L-methionine. 243-247 (SILHE) lines the substrate pocket. The active-site Proton acceptor is the H246.

Belongs to the class I-like SAM-binding methyltransferase superfamily. Cation-independent O-methyltransferase family. COMT subfamily.

The enzyme catalyses (S)-scoulerine + S-adenosyl-L-methionine = (S)-tetrahydrocolumbamine + S-adenosyl-L-homocysteine + H(+). It participates in alkaloid biosynthesis. In terms of biological role, methyltransferase involved in the biosynthesis of the benzylisoquinoline alkaloid noscapine. Catalyzes the conversion of (S)-scoulerine to (S)-tetrahydrocolumbamine. This Papaver somniferum (Opium poppy) protein is Probable scoulerine-9-O-methyltransferase OMT3B.